The sequence spans 359 residues: N-acetyl-gamma-glutamyl-phosphate reductase (359 aa).

C162 is an active-site residue.

It belongs to the NAGSA dehydrogenase family. Type 1 subfamily.

The protein resides in the cytoplasm. It catalyses the reaction N-acetyl-L-glutamate 5-semialdehyde + phosphate + NADP(+) = N-acetyl-L-glutamyl 5-phosphate + NADPH + H(+). The protein operates within amino-acid biosynthesis; L-arginine biosynthesis; N(2)-acetyl-L-ornithine from L-glutamate: step 3/4. Its function is as follows. Catalyzes the NADPH-dependent reduction of N-acetyl-5-glutamyl phosphate to yield N-acetyl-L-glutamate 5-semialdehyde. The chain is N-acetyl-gamma-glutamyl-phosphate reductase from Prochlorococcus marinus (strain NATL1A).